A 150-amino-acid chain; its full sequence is 6,7-dimethyl-8-ribityllumazine synthase (150 aa).

5-amino-6-(D-ribitylamino)uracil contacts are provided by residues Phe11, 43 to 45 (TYE), and 67 to 69 (AVI). 72-73 (AT) is a binding site for (2S)-2-hydroxy-3-oxobutyl phosphate. His75 acts as the Proton donor in catalysis. Leu100 is a binding site for 5-amino-6-(D-ribitylamino)uracil. (2S)-2-hydroxy-3-oxobutyl phosphate is bound at residue Arg115.

The protein belongs to the DMRL synthase family.

The enzyme catalyses (2S)-2-hydroxy-3-oxobutyl phosphate + 5-amino-6-(D-ribitylamino)uracil = 6,7-dimethyl-8-(1-D-ribityl)lumazine + phosphate + 2 H2O + H(+). Its pathway is cofactor biosynthesis; riboflavin biosynthesis; riboflavin from 2-hydroxy-3-oxobutyl phosphate and 5-amino-6-(D-ribitylamino)uracil: step 1/2. In terms of biological role, catalyzes the formation of 6,7-dimethyl-8-ribityllumazine by condensation of 5-amino-6-(D-ribitylamino)uracil with 3,4-dihydroxy-2-butanone 4-phosphate. This is the penultimate step in the biosynthesis of riboflavin. This Staphylothermus marinus (strain ATCC 43588 / DSM 3639 / JCM 9404 / F1) protein is 6,7-dimethyl-8-ribityllumazine synthase.